Here is a 397-residue protein sequence, read N- to C-terminus: Elongation factor Tu (397 aa).

The tr-type G domain occupies 10–206 (KPHVNIGTIG…AVDENVPDPE (197 aa)). The segment at 19 to 26 (GHVDHGKT) is G1. 19–26 (GHVDHGKT) contacts GTP. T26 serves as a coordination point for Mg(2+). A G2 region spans residues 62–66 (GITIQ). The interval 83 to 86 (DAPG) is G3. GTP contacts are provided by residues 83–87 (DAPGH) and 138–141 (NKAD). Residues 138-141 (NKAD) are G4. Positions 176–178 (SAL) are G5.

It belongs to the TRAFAC class translation factor GTPase superfamily. Classic translation factor GTPase family. EF-Tu/EF-1A subfamily. As to quaternary structure, monomer.

It is found in the cytoplasm. It carries out the reaction GTP + H2O = GDP + phosphate + H(+). Functionally, GTP hydrolase that promotes the GTP-dependent binding of aminoacyl-tRNA to the A-site of ribosomes during protein biosynthesis. In Saccharopolyspora erythraea (strain ATCC 11635 / DSM 40517 / JCM 4748 / NBRC 13426 / NCIMB 8594 / NRRL 2338), this protein is Elongation factor Tu.